The following is a 279-amino-acid chain: Small ribosomal subunit protein uS2 (279 aa).

The tract at residues 232–279 is disordered; sequence RRRGTDEKPEAGVASDEPLAEWERELLEEPKKSDEPKSDEQPAAAAAE. Basic and acidic residues predominate over residues 252–271; sequence EWERELLEEPKKSDEPKSDE.

This sequence belongs to the universal ribosomal protein uS2 family.

The sequence is that of Small ribosomal subunit protein uS2 from Salinispora arenicola (strain CNS-205).